We begin with the raw amino-acid sequence, 269 residues long: Intron-associated endonuclease 3 (269 aa).

In terms of biological role, this endonuclease is specific to the nrdB gene splice junction and is involved in intron homing. In Enterobacteria phage RB3 (Bacteriophage RB3), this protein is Intron-associated endonuclease 3 (ITEVIIIR).